Here is a 326-residue protein sequence, read N- to C-terminus: Probable oxidoreductase patJ (326 aa).

Residues 287–326 (HGVQPGSVNGSNGHSTGVESKLEQLGSRAQRRVVIDDAGK) form a disordered region. Residues 292-304 (GSVNGSNGHSTGV) are compositionally biased toward polar residues.

The protein belongs to the oxidoreductase OpS7 family.

The protein resides in the vacuole lumen. It localises to the cytoplasmic vesicle lumen. The protein operates within mycotoxin biosynthesis; patulin biosynthesis. Probable oxidoreductase; part of the gene cluster that mediates the biosynthesis of patulin, an acetate-derived tetraketide mycotoxin produced by several fungal species that shows antimicrobial properties against several bacteria. PatJ acts with patO in the vacuole to convert gentisyl alcohol to isoepoxydon. The pathway begins with the synthesis of 6-methylsalicylic acid by the polyketide synthase (PKS) patK via condensation of acetate and malonate units. The 6-methylsalicylic acid decarboxylase patG then catalyzes the decarboxylation of 6-methylsalicylic acid to yield m-cresol (also known as 3-methylphenol). These first reactions occur in the cytosol. The intermediate m-cresol is then transported into the endoplasmic reticulum where the cytochrome P450 monooxygenase patH converts it to m-hydroxybenzyl alcohol, which is further converted to gentisyl alcohol by the cytochrome P450 monooxygenase patI. The oxidoreductases patJ and patO further convert gentisyl alcohol to isoepoxydon in the vacuole. PatN catalyzes then the transformation of isoepoxydon into phyllostine. The cluster protein patF is responsible for the conversion from phyllostine to neopatulin whereas the alcohol dehydrogenase patD converts neopatulin to E-ascladiol. The steps between isoepoxydon and E-ascladiol occur in the cytosol, and E-ascladiol is probably secreted to the extracellular space by one of the cluster-specific transporters patC or patM. Finally, the secreted patulin synthase patE catalyzes the conversion of E-ascladiol to patulin. The chain is Probable oxidoreductase patJ from Penicillium expansum (Blue mold rot fungus).